We begin with the raw amino-acid sequence, 521 residues long: Bifunctional purine biosynthesis protein PurH (521 aa).

In terms of domain architecture, MGS-like spans 1–145; sequence MIKQALISVS…KNHRDVTVVV (145 aa).

This sequence belongs to the PurH family.

It carries out the reaction (6R)-10-formyltetrahydrofolate + 5-amino-1-(5-phospho-beta-D-ribosyl)imidazole-4-carboxamide = 5-formamido-1-(5-phospho-D-ribosyl)imidazole-4-carboxamide + (6S)-5,6,7,8-tetrahydrofolate. The catalysed reaction is IMP + H2O = 5-formamido-1-(5-phospho-D-ribosyl)imidazole-4-carboxamide. Its pathway is purine metabolism; IMP biosynthesis via de novo pathway; 5-formamido-1-(5-phospho-D-ribosyl)imidazole-4-carboxamide from 5-amino-1-(5-phospho-D-ribosyl)imidazole-4-carboxamide (10-formyl THF route): step 1/1. It functions in the pathway purine metabolism; IMP biosynthesis via de novo pathway; IMP from 5-formamido-1-(5-phospho-D-ribosyl)imidazole-4-carboxamide: step 1/1. The sequence is that of Bifunctional purine biosynthesis protein PurH from Burkholderia vietnamiensis (strain G4 / LMG 22486) (Burkholderia cepacia (strain R1808)).